The chain runs to 240 residues: Tetrahydromethanopterin S-methyltransferase subunit A (240 aa).

Residues 1–218 (MAEKREPAAG…KFHAGVHAGK (218 aa)) lie on the Cytoplasmic side of the membrane. His-85 provides a ligand contact to 5-hydroxybenzimidazolylcob(I)amide. Residues 219–239 (FEGIMIGLAITLSLLGLILFG) form a helical membrane-spanning segment. Position 240 (Arg-240) is a topological domain, extracellular.

This sequence belongs to the MtrA family. As to quaternary structure, the complex is composed of 8 subunits; MtrA, MtrB, MtrC, MtrD, MtrE, MtrF, MtrG and MtrH. 5-hydroxybenzimidazolylcob(I)amide serves as cofactor.

It is found in the cell membrane. The enzyme catalyses 5-methyl-5,6,7,8-tetrahydromethanopterin + coenzyme M + 2 Na(+)(in) = 5,6,7,8-tetrahydromethanopterin + methyl-coenzyme M + 2 Na(+)(out). Its pathway is one-carbon metabolism; methanogenesis from CO(2); methyl-coenzyme M from 5,10-methylene-5,6,7,8-tetrahydromethanopterin: step 2/2. In terms of biological role, part of a complex that catalyzes the formation of methyl-coenzyme M and tetrahydromethanopterin from coenzyme M and methyl-tetrahydromethanopterin. This is an energy-conserving, sodium-ion translocating step. This Methanohalophilus mahii (strain ATCC 35705 / DSM 5219 / SLP) protein is Tetrahydromethanopterin S-methyltransferase subunit A.